A 115-amino-acid polypeptide reads, in one-letter code: NADH-ubiquinone oxidoreductase chain 3 (115 aa).

3 helical membrane passes run 4–24 (LMAL…AFWL), 55–75 (FFLV…LLPL), and 84–104 (INIM…GLAY).

It belongs to the complex I subunit 3 family. As to quaternary structure, core subunit of respiratory chain NADH dehydrogenase (Complex I) which is composed of 45 different subunits. Interacts with TMEM186. Interacts with TMEM242.

It localises to the mitochondrion inner membrane. The catalysed reaction is a ubiquinone + NADH + 5 H(+)(in) = a ubiquinol + NAD(+) + 4 H(+)(out). Its function is as follows. Core subunit of the mitochondrial membrane respiratory chain NADH dehydrogenase (Complex I) which catalyzes electron transfer from NADH through the respiratory chain, using ubiquinone as an electron acceptor. Essential for the catalytic activity of complex I. In Peromyscus melanotis (Black-eared mouse), this protein is NADH-ubiquinone oxidoreductase chain 3.